The sequence spans 378 residues: Putative glutamate--cysteine ligase 2 (378 aa).

Belongs to the glutamate--cysteine ligase type 2 family. YbdK subfamily.

It carries out the reaction L-cysteine + L-glutamate + ATP = gamma-L-glutamyl-L-cysteine + ADP + phosphate + H(+). Its function is as follows. ATP-dependent carboxylate-amine ligase which exhibits weak glutamate--cysteine ligase activity. The sequence is that of Putative glutamate--cysteine ligase 2 from Ectopseudomonas mendocina (strain ymp) (Pseudomonas mendocina).